The primary structure comprises 166 residues: Putative tRNA (cytidine(34)-2'-O)-methyltransferase (166 aa).

Residues Leu-83, Gly-109, Ile-130, and Ser-138 each coordinate S-adenosyl-L-methionine.

This sequence belongs to the class IV-like SAM-binding methyltransferase superfamily. RNA methyltransferase TrmH family. TrmL subfamily.

Its subcellular location is the cytoplasm. It carries out the reaction cytidine(34) in tRNA + S-adenosyl-L-methionine = 2'-O-methylcytidine(34) in tRNA + S-adenosyl-L-homocysteine + H(+). The catalysed reaction is 5-carboxymethylaminomethyluridine(34) in tRNA(Leu) + S-adenosyl-L-methionine = 5-carboxymethylaminomethyl-2'-O-methyluridine(34) in tRNA(Leu) + S-adenosyl-L-homocysteine + H(+). In terms of biological role, could methylate the ribose at the nucleotide 34 wobble position in tRNA. This chain is Putative tRNA (cytidine(34)-2'-O)-methyltransferase, found in Mycoplasma pneumoniae (strain ATCC 29342 / M129 / Subtype 1) (Mycoplasmoides pneumoniae).